Consider the following 482-residue polypeptide: Glycogen synthase (482 aa).

Lysine 20 contacts ADP-alpha-D-glucose.

It belongs to the glycosyltransferase 1 family. Bacterial/plant glycogen synthase subfamily.

The enzyme catalyses [(1-&gt;4)-alpha-D-glucosyl](n) + ADP-alpha-D-glucose = [(1-&gt;4)-alpha-D-glucosyl](n+1) + ADP + H(+). The protein operates within glycan biosynthesis; glycogen biosynthesis. Synthesizes alpha-1,4-glucan chains using ADP-glucose. The sequence is that of Glycogen synthase from Aliivibrio salmonicida (strain LFI1238) (Vibrio salmonicida (strain LFI1238)).